Here is a 65-residue protein sequence, read N- to C-terminus: Large ribosomal subunit protein bL35 (65 aa).

The tract at residues 1 to 28 is disordered; it reads MPKMKTHRGAAKRFKKTGTGKIKRGQSK.

It belongs to the bacterial ribosomal protein bL35 family.

This Acidobacterium capsulatum (strain ATCC 51196 / DSM 11244 / BCRC 80197 / JCM 7670 / NBRC 15755 / NCIMB 13165 / 161) protein is Large ribosomal subunit protein bL35.